We begin with the raw amino-acid sequence, 316 residues long: ATP synthase gamma chain (316 aa).

The protein belongs to the ATPase gamma chain family. As to quaternary structure, F-type ATPases have 2 components, CF(1) - the catalytic core - and CF(0) - the membrane proton channel. CF(1) has five subunits: alpha(3), beta(3), gamma(1), delta(1), epsilon(1). CF(0) has three main subunits: a, b and c.

The protein localises to the cellular thylakoid membrane. Its function is as follows. Produces ATP from ADP in the presence of a proton gradient across the membrane. The gamma chain is believed to be important in regulating ATPase activity and the flow of protons through the CF(0) complex. This is ATP synthase gamma chain from Prochlorococcus marinus (strain MIT 9313).